The sequence spans 306 residues: Agmatinase (306 aa).

Mn(2+)-binding residues include His126, Asp149, His151, Asp153, Asp230, and Asp232.

It belongs to the arginase family. Agmatinase subfamily. The cofactor is Mn(2+).

The enzyme catalyses agmatine + H2O = urea + putrescine. The protein operates within amine and polyamine biosynthesis; putrescine biosynthesis via agmatine pathway; putrescine from agmatine: step 1/1. Catalyzes the formation of putrescine from agmatine. The chain is Agmatinase from Escherichia coli O1:K1 / APEC.